The sequence spans 249 residues: 3-deoxy-manno-octulosonate cytidylyltransferase (249 aa).

This sequence belongs to the KdsB family.

The protein localises to the cytoplasm. It catalyses the reaction 3-deoxy-alpha-D-manno-oct-2-ulosonate + CTP = CMP-3-deoxy-beta-D-manno-octulosonate + diphosphate. The protein operates within nucleotide-sugar biosynthesis; CMP-3-deoxy-D-manno-octulosonate biosynthesis; CMP-3-deoxy-D-manno-octulosonate from 3-deoxy-D-manno-octulosonate and CTP: step 1/1. Its pathway is bacterial outer membrane biogenesis; lipopolysaccharide biosynthesis. Functionally, activates KDO (a required 8-carbon sugar) for incorporation into bacterial lipopolysaccharide in Gram-negative bacteria. The chain is 3-deoxy-manno-octulosonate cytidylyltransferase from Photorhabdus laumondii subsp. laumondii (strain DSM 15139 / CIP 105565 / TT01) (Photorhabdus luminescens subsp. laumondii).